A 442-amino-acid polypeptide reads, in one-letter code: Xaa-Pro dipeptidase (442 aa).

Residues D245, D256, H338, E383, and E422 each contribute to the Mn(2+) site.

Belongs to the peptidase M24B family. Bacterial-type prolidase subfamily. Mn(2+) serves as cofactor.

It catalyses the reaction Xaa-L-Pro dipeptide + H2O = an L-alpha-amino acid + L-proline. In terms of biological role, splits dipeptides with a prolyl residue in the C-terminal position. The polypeptide is Xaa-Pro dipeptidase (Sodalis glossinidius (strain morsitans)).